Reading from the N-terminus, the 355-residue chain is UPF0421 protein BCE33L2478 (355 aa).

4 consecutive transmembrane segments (helical) span residues Ile-19–Val-39, Phe-74–Val-94, Thr-109–Ile-129, and Leu-131–Pro-151.

It belongs to the UPF0421 family.

It localises to the cell membrane. The chain is UPF0421 protein BCE33L2478 from Bacillus cereus (strain ZK / E33L).